The sequence spans 194 residues: Imidazoleglycerol-phosphate dehydratase (194 aa).

Belongs to the imidazoleglycerol-phosphate dehydratase family.

The protein resides in the cytoplasm. It catalyses the reaction D-erythro-1-(imidazol-4-yl)glycerol 3-phosphate = 3-(imidazol-4-yl)-2-oxopropyl phosphate + H2O. The protein operates within amino-acid biosynthesis; L-histidine biosynthesis; L-histidine from 5-phospho-alpha-D-ribose 1-diphosphate: step 6/9. The chain is Imidazoleglycerol-phosphate dehydratase from Oceanobacillus iheyensis (strain DSM 14371 / CIP 107618 / JCM 11309 / KCTC 3954 / HTE831).